A 309-amino-acid polypeptide reads, in one-letter code: Ankyrin repeat protein VACWR203 (309 aa).

5 ANK repeats span residues 13–44 (SVFK…SLTI), 110–142 (KYGT…DINA), 160–189 (FVYH…DLTI), 197–231 (PVVY…RASH), and 269–298 (EGRT…DIVV).

This sequence belongs to the orthopoxviruses VACWR203 protein family.

This chain is Ankyrin repeat protein VACWR203, found in Bos taurus (Bovine).